A 557-amino-acid polypeptide reads, in one-letter code: 2-isopropylmalate synthase (557 aa).

The region spanning 33-307 is the Pyruvate carboxyltransferase domain; that stretch reads PIWCSSDLRD…DPQLDFSDID (275 aa). Positions 42, 246, 248, and 282 each coordinate Mg(2+). Positions 439-557 are regulatory domain; it reads ANAPYALVSH…SLSQQEAKAA (119 aa).

It belongs to the alpha-IPM synthase/homocitrate synthase family. LeuA type 2 subfamily. As to quaternary structure, homodimer. Mg(2+) serves as cofactor.

The protein resides in the cytoplasm. The catalysed reaction is 3-methyl-2-oxobutanoate + acetyl-CoA + H2O = (2S)-2-isopropylmalate + CoA + H(+). Its pathway is amino-acid biosynthesis; L-leucine biosynthesis; L-leucine from 3-methyl-2-oxobutanoate: step 1/4. In terms of biological role, catalyzes the condensation of the acetyl group of acetyl-CoA with 3-methyl-2-oxobutanoate (2-ketoisovalerate) to form 3-carboxy-3-hydroxy-4-methylpentanoate (2-isopropylmalate). This Pseudomonas putida (strain GB-1) protein is 2-isopropylmalate synthase.